We begin with the raw amino-acid sequence, 313 residues long: tRNA dimethylallyltransferase (313 aa).

Position 9 to 16 (9 to 16 (GPTATGKS)) interacts with ATP. 11–16 (TATGKS) provides a ligand contact to substrate.

Belongs to the IPP transferase family. Monomer. It depends on Mg(2+) as a cofactor.

The enzyme catalyses adenosine(37) in tRNA + dimethylallyl diphosphate = N(6)-dimethylallyladenosine(37) in tRNA + diphosphate. Functionally, catalyzes the transfer of a dimethylallyl group onto the adenine at position 37 in tRNAs that read codons beginning with uridine, leading to the formation of N6-(dimethylallyl)adenosine (i(6)A). The protein is tRNA dimethylallyltransferase of Mycobacteroides abscessus (strain ATCC 19977 / DSM 44196 / CCUG 20993 / CIP 104536 / JCM 13569 / NCTC 13031 / TMC 1543 / L948) (Mycobacterium abscessus).